A 183-amino-acid chain; its full sequence is A-type ATP synthase subunit E (183 aa).

The protein belongs to the V-ATPase E subunit family. As to quaternary structure, has multiple subunits with at least A(3), B(3), C, D, E, F, H, I and proteolipid K(x).

It localises to the cell membrane. Component of the A-type ATP synthase that produces ATP from ADP in the presence of a proton gradient across the membrane. The chain is A-type ATP synthase subunit E from Methanosarcina barkeri (strain Fusaro / DSM 804).